Here is a 240-residue protein sequence, read N- to C-terminus: Carboxy-S-adenosyl-L-methionine synthase (240 aa).

S-adenosyl-L-methionine-binding positions include Tyr-35, 61 to 63 (GCS), 86 to 87 (DN), 112 to 113 (DI), and Arg-194.

This sequence belongs to the class I-like SAM-binding methyltransferase superfamily. Cx-SAM synthase family. As to quaternary structure, homodimer.

It catalyses the reaction prephenate + S-adenosyl-L-methionine = carboxy-S-adenosyl-L-methionine + 3-phenylpyruvate + H2O. Catalyzes the conversion of S-adenosyl-L-methionine (SAM) to carboxy-S-adenosyl-L-methionine (Cx-SAM). This chain is Carboxy-S-adenosyl-L-methionine synthase, found in Wolinella succinogenes (strain ATCC 29543 / DSM 1740 / CCUG 13145 / JCM 31913 / LMG 7466 / NCTC 11488 / FDC 602W) (Vibrio succinogenes).